A 120-amino-acid polypeptide reads, in one-letter code: NAD(P)H-quinone oxidoreductase subunit 3, chloroplastic (120 aa).

Transmembrane regions (helical) follow at residues 9 to 29 (IFWA…LISG), 64 to 84 (MFAL…PWAM), and 88 to 108 (VLGV…ILGL).

It belongs to the complex I subunit 3 family. In terms of assembly, NDH is composed of at least 16 different subunits, 5 of which are encoded in the nucleus.

It localises to the plastid. Its subcellular location is the chloroplast thylakoid membrane. The enzyme catalyses a plastoquinone + NADH + (n+1) H(+)(in) = a plastoquinol + NAD(+) + n H(+)(out). It catalyses the reaction a plastoquinone + NADPH + (n+1) H(+)(in) = a plastoquinol + NADP(+) + n H(+)(out). Functionally, NDH shuttles electrons from NAD(P)H:plastoquinone, via FMN and iron-sulfur (Fe-S) centers, to quinones in the photosynthetic chain and possibly in a chloroplast respiratory chain. The immediate electron acceptor for the enzyme in this species is believed to be plastoquinone. Couples the redox reaction to proton translocation, and thus conserves the redox energy in a proton gradient. This Olimarabidopsis pumila (Dwarf rocket) protein is NAD(P)H-quinone oxidoreductase subunit 3, chloroplastic.